Here is a 207-residue protein sequence, read N- to C-terminus: Outer-membrane lipoprotein carrier protein (207 aa).

Positions 1–21 (MRLIRMLLLPVLAVTTLSAHA) are cleaved as a signal peptide.

The protein belongs to the LolA family. Monomer.

It is found in the periplasm. In terms of biological role, participates in the translocation of lipoproteins from the inner membrane to the outer membrane. Only forms a complex with a lipoprotein if the residue after the N-terminal Cys is not an aspartate (The Asp acts as a targeting signal to indicate that the lipoprotein should stay in the inner membrane). This is Outer-membrane lipoprotein carrier protein from Pseudomonas fluorescens (strain ATCC BAA-477 / NRRL B-23932 / Pf-5).